A 442-amino-acid chain; its full sequence is Protein translocase subunit SecF (442 aa).

The disordered stretch occupies residues 1–39; the sequence is MASKAKTGRDDEATSAVELTEATESAVARTDGDSTTDTA. Transmembrane regions (helical) follow at residues 67-87, 187-207, 218-238, 243-263, 301-321, and 331-351; these read WFGVSGAIVAVAIASIVFRGF, ITKKAVIALVVFLVLVALYIT, AITAMLFDLTVTAGVYSLVGF, ATVIGLLTILGFSLYDTVIVF, LIGVLPVLALMVVAVWLLGVG, and LIGIIIGTYSSIFFATPLLVT. The interval 366-442 is disordered; it reads VLKRRNSGSP…PTGKRNAGRR (77 aa). A compositionally biased stretch (low complexity) spans 402 to 432; sequence QASSQSAPRAAQGSSKPAPGARPVRPVGTRR. The segment covering 433–442 has biased composition (basic residues); it reads PTGKRNAGRR.

This sequence belongs to the SecD/SecF family. SecF subfamily. As to quaternary structure, forms a complex with SecD. Part of the essential Sec protein translocation apparatus which comprises SecA, SecYEG and auxiliary proteins SecDF. Other proteins may also be involved.

It is found in the cell membrane. Functionally, part of the Sec protein translocase complex. Interacts with the SecYEG preprotein conducting channel. SecDF uses the proton motive force (PMF) to complete protein translocation after the ATP-dependent function of SecA. This chain is Protein translocase subunit SecF, found in Mycobacterium tuberculosis (strain ATCC 25618 / H37Rv).